Reading from the N-terminus, the 207-residue chain is ATP-dependent Clp protease proteolytic subunit (207 aa).

Residues 1–14 (MSYSGERDNLAPHM) constitute a propeptide that is removed on maturation. Catalysis depends on S111, which acts as the Nucleophile. The active site involves H136.

The protein belongs to the peptidase S14 family. In terms of assembly, fourteen ClpP subunits assemble into 2 heptameric rings which stack back to back to give a disk-like structure with a central cavity, resembling the structure of eukaryotic proteasomes. Component of the ClpAP and ClpXP complexes.

The protein resides in the cytoplasm. It carries out the reaction Hydrolysis of proteins to small peptides in the presence of ATP and magnesium. alpha-casein is the usual test substrate. In the absence of ATP, only oligopeptides shorter than five residues are hydrolyzed (such as succinyl-Leu-Tyr-|-NHMec, and Leu-Tyr-Leu-|-Tyr-Trp, in which cleavage of the -Tyr-|-Leu- and -Tyr-|-Trp bonds also occurs).. Its function is as follows. Cleaves peptides in various proteins in a process that requires ATP hydrolysis. Has a chymotrypsin-like activity. Plays a major role in the degradation of misfolded proteins. In Salmonella paratyphi A (strain ATCC 9150 / SARB42), this protein is ATP-dependent Clp protease proteolytic subunit.